Reading from the N-terminus, the 338-residue chain is Ketol-acid reductoisomerase (NADP(+)) (338 aa).

One can recognise a KARI N-terminal Rossmann domain in the interval 1-181 (MKVYYDKDAD…GGTKGGVIET (181 aa)). NADP(+) is bound by residues 24 to 27 (YGSQ), arginine 47, and serine 52. Histidine 107 is a catalytic residue. Glycine 133 is an NADP(+) binding site. A KARI C-terminal knotted domain is found at 182-327 (NFKEETETDL…GQLRDMMPWI (146 aa)). Mg(2+) contacts are provided by aspartate 190, glutamate 194, glutamate 226, and glutamate 230. Serine 251 contacts substrate.

It belongs to the ketol-acid reductoisomerase family. The cofactor is Mg(2+).

It carries out the reaction (2R)-2,3-dihydroxy-3-methylbutanoate + NADP(+) = (2S)-2-acetolactate + NADPH + H(+). It catalyses the reaction (2R,3R)-2,3-dihydroxy-3-methylpentanoate + NADP(+) = (S)-2-ethyl-2-hydroxy-3-oxobutanoate + NADPH + H(+). It functions in the pathway amino-acid biosynthesis; L-isoleucine biosynthesis; L-isoleucine from 2-oxobutanoate: step 2/4. Its pathway is amino-acid biosynthesis; L-valine biosynthesis; L-valine from pyruvate: step 2/4. Functionally, involved in the biosynthesis of branched-chain amino acids (BCAA). Catalyzes an alkyl-migration followed by a ketol-acid reduction of (S)-2-acetolactate (S2AL) to yield (R)-2,3-dihydroxy-isovalerate. In the isomerase reaction, S2AL is rearranged via a Mg-dependent methyl migration to produce 3-hydroxy-3-methyl-2-ketobutyrate (HMKB). In the reductase reaction, this 2-ketoacid undergoes a metal-dependent reduction by NADPH to yield (R)-2,3-dihydroxy-isovalerate. The sequence is that of Ketol-acid reductoisomerase (NADP(+)) from Azoarcus sp. (strain BH72).